Here is a 329-residue protein sequence, read N- to C-terminus: Malate dehydrogenase (329 aa).

12-18 (GAAGQIG) lines the NAD(+) pocket. Residues arginine 93 and arginine 99 each coordinate substrate. NAD(+)-binding positions include asparagine 106, glutamine 113, and 130–132 (VGN). Asparagine 132 and arginine 166 together coordinate substrate. Residue histidine 191 is the Proton acceptor of the active site.

It belongs to the LDH/MDH superfamily. MDH type 2 family.

The catalysed reaction is (S)-malate + NAD(+) = oxaloacetate + NADH + H(+). Its function is as follows. Catalyzes the reversible oxidation of malate to oxaloacetate. The chain is Malate dehydrogenase from Aromatoleum aromaticum (strain DSM 19018 / LMG 30748 / EbN1) (Azoarcus sp. (strain EbN1)).